A 364-amino-acid chain; its full sequence is Methylenetetrahydrofolate--tRNA-(uracil-5-)-methyltransferase TrmFO (364 aa).

Residue 11–16 coordinates FAD; that stretch reads GAGLAG. The span at 335-352 shows a compositional bias: polar residues; the sequence is SYLNQPCSSANDPTSSLL. A disordered region spans residues 335–364; sequence SYLNQPCSSANDPTSSLLDRSPAQRDIPLQ.

Belongs to the MnmG family. TrmFO subfamily. It depends on FAD as a cofactor.

The protein resides in the cytoplasm. The enzyme catalyses uridine(54) in tRNA + (6R)-5,10-methylene-5,6,7,8-tetrahydrofolate + NADH + H(+) = 5-methyluridine(54) in tRNA + (6S)-5,6,7,8-tetrahydrofolate + NAD(+). It carries out the reaction uridine(54) in tRNA + (6R)-5,10-methylene-5,6,7,8-tetrahydrofolate + NADPH + H(+) = 5-methyluridine(54) in tRNA + (6S)-5,6,7,8-tetrahydrofolate + NADP(+). Its function is as follows. Catalyzes the folate-dependent formation of 5-methyl-uridine at position 54 (M-5-U54) in all tRNAs. The polypeptide is Methylenetetrahydrofolate--tRNA-(uracil-5-)-methyltransferase TrmFO (Prochlorococcus marinus (strain MIT 9313)).